The sequence spans 330 residues: Polygalacturonase inhibitor 2 (330 aa).

An N-terminal signal peptide occupies residues 1–21; the sequence is MDKTMTLFLLLSTLLLTTSLA. Cystine bridges form between cysteine 25/cysteine 55 and cysteine 56/cysteine 63. LRR repeat units lie at residues 69-93, 94-117, 118-141, 142-166, 167-192, 194-215, 217-237, 238-260, 261-285, and 287-308; these read NHRV…VGDL, PYLT…TIAK, LKNL…FLSQ, LKNL…LSSL, RKLE…TFSG, VPSL…LGNP, FYRI…LFGA, KKTT…KVKL, AKTL…WSKA, and FQLL…EYIQ. N-linked (GlcNAc...) asparagine glycosylation is found at asparagine 106, asparagine 120, and asparagine 130. Asparagine 291 carries an N-linked (GlcNAc...) asparagine glycan. 2 cysteine pairs are disulfide-bonded: cysteine 298-cysteine 320 and cysteine 322-cysteine 329.

Belongs to the polygalacturonase-inhibiting protein family.

The protein localises to the secreted. The protein resides in the cell wall. It localises to the membrane. Functionally, inhibitor of fungal polygalacturonase. It is an important factor for plant resistance to phytopathogenic fungi. The chain is Polygalacturonase inhibitor 2 (PGIP2) from Arabidopsis thaliana (Mouse-ear cress).